A 302-amino-acid polypeptide reads, in one-letter code: Enoyl-CoA delta isomerase 1, mitochondrial (302 aa).

The transit peptide at 1–41 (MALVASVRVPARVLLRAGARLPGAALGRTERAAGGGDGARR) directs the protein to the mitochondrion. Lysine 61 carries the N6-acetyllysine; alternate modification. N6-succinyllysine; alternate is present on lysine 61. N6-succinyllysine is present on lysine 84. Lysine 89 bears the N6-acetyllysine mark. Substrate contacts are provided by residues 106 to 110 (AGLDL), glycine 153, and asparagine 177. Lysine 283 is subject to N6-acetyllysine; alternate. Lysine 283 is modified (N6-succinyllysine; alternate). An N6-succinyllysine modification is found at lysine 288.

It belongs to the enoyl-CoA hydratase/isomerase family. In terms of assembly, homotrimer. In terms of tissue distribution, expressed in liver (at protein level).

Its subcellular location is the mitochondrion matrix. It catalyses the reaction a (3Z)-enoyl-CoA = a 4-saturated (2E)-enoyl-CoA. It carries out the reaction a (3E)-enoyl-CoA = a 4-saturated (2E)-enoyl-CoA. The catalysed reaction is (3Z)-octenoyl-CoA = (2E)-octenoyl-CoA. The enzyme catalyses (2E)-tetradecenoyl-CoA = (3Z)-tetradecenoyl-CoA. It catalyses the reaction (3Z)-dodecenoyl-CoA = (2E)-dodecenoyl-CoA. It carries out the reaction (3Z)-hexenoyl-CoA = (2E)-hexenoyl-CoA. The catalysed reaction is (3Z)-decenoyl-CoA = (2E)-decenoyl-CoA. It participates in lipid metabolism; fatty acid beta-oxidation. Key enzyme of fatty acid beta-oxidation. Able to isomerize both 3-cis (3Z) and 3-trans (3E) double bonds into the 2-trans (2E) form in a range of enoyl-CoA species, with a preference for (3Z)-enoyl-CoAs over (3E)-enoyl-CoAs. The catalytic efficiency of this enzyme is not affected by the fatty acyl chain length. The polypeptide is Enoyl-CoA delta isomerase 1, mitochondrial (ECI1) (Homo sapiens (Human)).